A 490-amino-acid polypeptide reads, in one-letter code: Cytochrome P450 71A22 (490 aa).

A helical transmembrane segment spans residues 2-22; the sequence is ESMIRIILLSLIIFITILFFI. Position 432 (Cys432) interacts with heme.

Belongs to the cytochrome P450 family. Requires heme as cofactor.

It localises to the membrane. The sequence is that of Cytochrome P450 71A22 (CYP71A22) from Arabidopsis thaliana (Mouse-ear cress).